Consider the following 814-residue polypeptide: Valine--tRNA ligase (814 aa).

Residues 46 to 56 carry the 'HIGH' region motif; it reads PTVSGQLHIGH. The 'KMSKS' region motif lies at 536-540; that stretch reads KMSKS. ATP is bound at residue K539.

Belongs to the class-I aminoacyl-tRNA synthetase family. ValS type 2 subfamily. In terms of assembly, monomer.

It localises to the cytoplasm. The enzyme catalyses tRNA(Val) + L-valine + ATP = L-valyl-tRNA(Val) + AMP + diphosphate. Catalyzes the attachment of valine to tRNA(Val). As ValRS can inadvertently accommodate and process structurally similar amino acids such as threonine, to avoid such errors, it has a 'posttransfer' editing activity that hydrolyzes mischarged Thr-tRNA(Val) in a tRNA-dependent manner. This is Valine--tRNA ligase from Rickettsia typhi (strain ATCC VR-144 / Wilmington).